Consider the following 167-residue polypeptide: Regulator of sigma D (167 aa).

It belongs to the Rsd/AlgQ family. Interacts with RpoD.

The protein localises to the cytoplasm. Binds RpoD and negatively regulates RpoD-mediated transcription activation by preventing the interaction between the primary sigma factor RpoD with the catalytic core of the RNA polymerase and with promoter DNA. May be involved in replacement of the RNA polymerase sigma subunit from RpoD to RpoS during the transition from exponential growth to the stationary phase. This Yersinia enterocolitica serotype O:8 / biotype 1B (strain NCTC 13174 / 8081) protein is Regulator of sigma D.